The chain runs to 94 residues: Small ribosomal subunit protein bS18 (94 aa).

The protein belongs to the bacterial ribosomal protein bS18 family. In terms of assembly, part of the 30S ribosomal subunit. Forms a tight heterodimer with protein bS6.

Binds as a heterodimer with protein bS6 to the central domain of the 16S rRNA, where it helps stabilize the platform of the 30S subunit. This is Small ribosomal subunit protein bS18 from Leptospira biflexa serovar Patoc (strain Patoc 1 / Ames).